Here is a 330-residue protein sequence, read N- to C-terminus: Ketol-acid reductoisomerase (NADP(+)) (330 aa).

The 181-residue stretch at 1–181 (MKMYYESDVN…GFTKAGVIET (181 aa)) folds into the KARI N-terminal Rossmann domain. Residues 24 to 27 (YGSQ), Arg-47, Ser-52, and 82 to 85 (DEIQ) each bind NADP(+). Residue His-107 is part of the active site. Residue Gly-133 coordinates NADP(+). Residues 182–327 (TFKEETETDL…ERLRKACGLQ (146 aa)) form the KARI C-terminal knotted domain. Residues Asp-190, Glu-194, Glu-226, and Glu-230 each contribute to the Mg(2+) site. Residue Ser-251 coordinates substrate.

This sequence belongs to the ketol-acid reductoisomerase family. Mg(2+) is required as a cofactor.

It carries out the reaction (2R)-2,3-dihydroxy-3-methylbutanoate + NADP(+) = (2S)-2-acetolactate + NADPH + H(+). The enzyme catalyses (2R,3R)-2,3-dihydroxy-3-methylpentanoate + NADP(+) = (S)-2-ethyl-2-hydroxy-3-oxobutanoate + NADPH + H(+). It participates in amino-acid biosynthesis; L-isoleucine biosynthesis; L-isoleucine from 2-oxobutanoate: step 2/4. The protein operates within amino-acid biosynthesis; L-valine biosynthesis; L-valine from pyruvate: step 2/4. Involved in the biosynthesis of branched-chain amino acids (BCAA). Catalyzes an alkyl-migration followed by a ketol-acid reduction of (S)-2-acetolactate (S2AL) to yield (R)-2,3-dihydroxy-isovalerate. In the isomerase reaction, S2AL is rearranged via a Mg-dependent methyl migration to produce 3-hydroxy-3-methyl-2-ketobutyrate (HMKB). In the reductase reaction, this 2-ketoacid undergoes a metal-dependent reduction by NADPH to yield (R)-2,3-dihydroxy-isovalerate. This is Ketol-acid reductoisomerase (NADP(+)) from Methanobrevibacter smithii (strain ATCC 35061 / DSM 861 / OCM 144 / PS).